Here is a 411-residue protein sequence, read N- to C-terminus: Phosphoglycerate kinase (411 aa).

Residues 19–21, R34, 57–60, R114, and R154 each bind substrate; these read DLN and HQSR. ATP contacts are provided by residues E332 and 358-361; that span reads GGHS.

It belongs to the phosphoglycerate kinase family. Monomer.

Its subcellular location is the cytoplasm. It catalyses the reaction (2R)-3-phosphoglycerate + ATP = (2R)-3-phospho-glyceroyl phosphate + ADP. The protein operates within carbohydrate degradation; glycolysis; pyruvate from D-glyceraldehyde 3-phosphate: step 2/5. The protein is Phosphoglycerate kinase of Thermococcus kodakarensis (strain ATCC BAA-918 / JCM 12380 / KOD1) (Pyrococcus kodakaraensis (strain KOD1)).